Here is a 427-residue protein sequence, read N- to C-terminus: Adenylosuccinate synthetase (427 aa).

GTP is bound by residues 12-18 (GDEGKGK) and 40-42 (GHT). The active-site Proton acceptor is Asp-13. Residues Asp-13 and Gly-40 each contribute to the Mg(2+) site. IMP is bound by residues 13 to 16 (DEGK), 38 to 41 (NAGH), Thr-128, Arg-142, Gln-223, Thr-238, and Arg-302. His-41 (proton donor) is an active-site residue. 298–304 (TTTGRPR) is a substrate binding site. GTP is bound by residues Arg-304, 330 to 332 (KLD), and 412 to 414 (GVG).

Belongs to the adenylosuccinate synthetase family. As to quaternary structure, homodimer. Mg(2+) serves as cofactor.

The protein localises to the cytoplasm. The enzyme catalyses IMP + L-aspartate + GTP = N(6)-(1,2-dicarboxyethyl)-AMP + GDP + phosphate + 2 H(+). It participates in purine metabolism; AMP biosynthesis via de novo pathway; AMP from IMP: step 1/2. In terms of biological role, plays an important role in the de novo pathway of purine nucleotide biosynthesis. Catalyzes the first committed step in the biosynthesis of AMP from IMP. In Pelotomaculum thermopropionicum (strain DSM 13744 / JCM 10971 / SI), this protein is Adenylosuccinate synthetase.